The primary structure comprises 446 residues: C4-dicarboxylate transport protein (446 aa).

A run of 9 helical transmembrane segments spans residues 25 to 45 (VQVLAAIVAGVLLGHFWPAIG), 58 to 78 (LVKMIIAPVIFLTVATGIASI), 93 to 113 (FAYFLFFSTLALIVGLVVANV), 159 to 179 (ALTEGSILQALFVAILFGLAL), 199 to 219 (VFFGLVGMLMKFAPIGAFGAM), 236 to 256 (LLIATFYLTSLFFVIVILGAV), 322 to 342 (IYMTLAALFIAQAVGVDLSLG), 370 to 390 (AATLSIVPSVPVAGLALILGI), and 400 to 420 (LTNFIGNALAAIVVAGWEKGL).

The protein belongs to the dicarboxylate/amino acid:cation symporter (DAACS) (TC 2.A.23) family.

It localises to the cell inner membrane. Its function is as follows. Responsible for the transport of dicarboxylates such as succinate, fumarate, and malate from the periplasm across the membrane. This chain is C4-dicarboxylate transport protein, found in Sphingopyxis alaskensis (strain DSM 13593 / LMG 18877 / RB2256) (Sphingomonas alaskensis).